The sequence spans 292 residues: MSMPATSTKTTKLATSLIDEYALLGWRAMLTEVNLSPKPGLVDRINCGAHKDMALEDFHRSALAIQGWLPRFIEFGACSAEMAPEAVLNGLRPIGMACEGDMFRATAGVNTHKGSIFSLGLLCAAIGRLLQLNQPVTPTTVCSTAASFCRGLTDRELRTNNSRLTAGQRLYQQLGLTGARGEAEAGYPLVINHALPHYLTLLDQGLDPELALLDTLLLLMATNGDTNVASRGGEGGLRWLQREAQTLLQKGGIRTPADLDYLRQFDRECIERNLSPGGSADLLILTWFLAQI.

This sequence belongs to the CitG/MdcB family.

The catalysed reaction is 3'-dephospho-CoA + ATP = 2'-(5''-triphospho-alpha-D-ribosyl)-3'-dephospho-CoA + adenine. Its function is as follows. Catalyzes the formation of 2-(5''-triphosphoribosyl)-3'-dephosphocoenzyme-A, the precursor of the prosthetic group of the holo-acyl carrier protein (gamma chain) of citrate lyase, from ATP and dephospho-CoA. The polypeptide is 2-(5''-triphosphoribosyl)-3'-dephosphocoenzyme-A synthase (Escherichia coli O127:H6 (strain E2348/69 / EPEC)).